We begin with the raw amino-acid sequence, 725 residues long: MHPEPSEPATGGAAELDCAQEPGVEESAGDHGSAGRGGCKEEINDPKEICVGSSDTSYHSQQKQSGDNGSGGHFAHPREDREDRGPRMTKSSLQKLCKQHKLYITPALNDTLYLHFKGFDRIENLEEYTGLRCLWLQSNGIQKIENLEAQTELRCLFLQMNLLRKIENLEPLQKLDALNLSNNYIKTIENLSCLPVLNTLQMAHNHLETVEDIQHLQECLRLCVLDLSHNKLSDPEILSILESMPDLRVLNLMGNPVIRQIPNYRRTVTVRLKHLTYLDDRPVFPKDRACAEAWARGGYAAEKEERQQWESRERKKITDSIEALAMIKQRAEERKRQRESQERGEMTSSDDGENVPASAEGKEEPPGDRETRQKMELFVKESFEAKDELCPEKPSGEEPPVEAKREDGGPEPEGTLPAETLLLSSPVEVKGEDGDGEPEGTLPAEAPPPPPPVEVKGEDGDQEPEGTLPAETLLLSPPVKVKGEDGDREPEGTLPAEAPPPPPLGAAREEPTPQAVATEGVFVTELDGTRTEDLETIRLETKETFCIDDLPDLEDDDETGKSLEDQNMCFPKIEVISSLSDDSDPELDYTSLPVLENLPTDTLSNIFAVSKDTSKAARVPFTDIFKKEAKRDLEIRKQDTKSPRPLIQELSDEDPSGQLLMPPTCQRDAAPLTSSGDRDSDFLAASSPVPTESAATPPETCVGVAQPSQALPTWDLTAFPAPKAS.

The disordered stretch occupies residues M1–S91. Residues G38 to E48 are compositionally biased toward basic and acidic residues. The segment covering S53–D67 has biased composition (polar residues). Positions H76 to P86 are enriched in basic and acidic residues. LRR repeat units follow at residues A107 to T129, G130 to T151, E152 to Q173, K174 to P195, V196 to Q217, and R221 to E242. The 39-residue stretch at P256–W294 folds into the LRRCT domain. Residues R330–E345 are compositionally biased toward basic and acidic residues. The disordered stretch occupies residues R330–P513. S358 is modified (phosphoserine). Composition is skewed to basic and acidic residues over residues E360 to G408 and V481 to E491. At T559 the chain carries Phosphothreonine. Phosphoserine occurs at positions 562 and 583. A compositionally biased stretch (basic and acidic residues) spans D632 to S642. A disordered region spans residues D632–G703.

It belongs to the DNAAF1 family. In terms of tissue distribution, mainly expressed in trachea and testis.

It is found in the cell projection. Its subcellular location is the cilium. The protein resides in the cytoplasm. The protein localises to the cytoskeleton. It localises to the spindle pole. Its function is as follows. Cilium-specific protein required for the stability of the ciliary architecture. Plays a role in cytoplasmic preassembly of dynein arms. Involved in regulation of microtubule-based cilia and actin-based brush border microvilli. This Homo sapiens (Human) protein is Dynein axonemal assembly factor 1 (DNAAF1).